The sequence spans 252 residues: MALIEDALYKRIKNRVGRAIAEYGLIEDGDRIAVGVSGGKDSYTLLHMLDTLRRRAPVRYEVVAINIDSGYPGFRADIIEEHLHENGFTVHMEKTDHYGIIKEKRRLDSSYCSICARLKRGALYALAQQHNCNKLALGHHMDDFIETLLLNQFFVGALKAMAPGMLADNGLTTVIRPLVYVSEEDIIQFSRNNRFPVVCCCCPVCGSADQQRRRMKELLKELEKENPYIKKSLLRALANVQPRHLLDKRLKS.

The PP-loop motif motif lies at 37-42 (SGGKDS). Positions 112, 115, and 202 each coordinate [4Fe-4S] cluster.

It belongs to the TtcA family. In terms of assembly, homodimer. It depends on Mg(2+) as a cofactor. The cofactor is [4Fe-4S] cluster.

It is found in the cytoplasm. It carries out the reaction cytidine(32) in tRNA + S-sulfanyl-L-cysteinyl-[cysteine desulfurase] + AH2 + ATP = 2-thiocytidine(32) in tRNA + L-cysteinyl-[cysteine desulfurase] + A + AMP + diphosphate + H(+). It participates in tRNA modification. Its function is as follows. Catalyzes the ATP-dependent 2-thiolation of cytidine in position 32 of tRNA, to form 2-thiocytidine (s(2)C32). The sulfur atoms are provided by the cysteine/cysteine desulfurase (IscS) system. This Geotalea daltonii (strain DSM 22248 / JCM 15807 / FRC-32) (Geobacter daltonii) protein is tRNA-cytidine(32) 2-sulfurtransferase.